A 424-amino-acid chain; its full sequence is L-glutamine:2-deoxy-scyllo-inosose aminotransferase (424 aa).

K202 is subject to N6-(pyridoxal phosphate)lysine.

It belongs to the DegT/DnrJ/EryC1 family. L-glutamine:2-deoxy-scyllo-inosose/scyllo-inosose aminotransferase subfamily. The cofactor is pyridoxal 5'-phosphate.

The enzyme catalyses 2-deoxy-L-scyllo-inosose + L-glutamine = 2-deoxy-scyllo-inosamine + 2-oxoglutaramate. It catalyses the reaction 3-amino-2,3-dideoxy-scyllo-inosose + L-glutamine = 2-deoxystreptamine + 2-oxoglutaramate. It participates in metabolic intermediate biosynthesis; 2-deoxystreptamine biosynthesis; 2-deoxystreptamine from D-glucose 6-phosphate: step 2/4. The protein operates within antibiotic biosynthesis; tobramycin biosynthesis. Functionally, catalyzes the PLP-dependent transamination of 2-deoxy-scyllo-inosose (2-DOI) to form 2-deoxy-scyllo-inosamine (2-DOIA) using L-glutamine as the amino donor. Also catalyzes the transamination of 3-amino-2,3-dideoxy-scyllo-inosose (keto-2-DOIA) into 2-deoxystreptamine (2-DOS). The protein is L-glutamine:2-deoxy-scyllo-inosose aminotransferase (tbmB) of Streptoalloteichus tenebrarius (strain ATCC 17920 / DSM 40477 / JCM 4838 / CBS 697.72 / NBRC 16177 / NCIMB 11028 / NRRL B-12390 / A12253. 1 / ISP 5477) (Streptomyces tenebrarius).